The primary structure comprises 410 residues: MKTPGVLLLILGLLASSSFAIIRIPLRKFTSIRRTMTEVGGSVEDLILKGPITKYSMQSSPKTTEPVSELLKNYLDAQYYGDIGIGTPPQCFTVVFDTGSSNLWVPSIHCKILDIACWVHHKYNSDKSSTYVKNGTSFDIHYGSGSLSGYLSQDTVSVPCKSDQSKARGIKVEKQIFGEATKQPGIVFVAAKFDGILGMGYPHISVNNVLPVFDNLMQQKLVDKNIFSFYLNRDPEGQPGGELMLGGTDSKYYHGELSYLNVTRKAYWQVHMDQLEVGNELTLCKGGCEAIVDTGTSLLVGPVEEVKELQKAIGAVPLIQGEYMIPCEKVSSLPTVYLKLGGKNYELHPDKYILKVSQGGKTICLSGFMGMDIPPPSGPLWILGDVFIGSYYTVFDRDNNRVGFANAVVL.

The first 20 residues, 1 to 20 (MKTPGVLLLILGLLASSSFA), serve as a signal peptide directing secretion. A propeptide spans 21 to 64 (IIRIPLRKFTSIRRTMTEVGGSVEDLILKGPITKYSMQSSPKTT) (activation peptide). Positions 79–405 (YYGDIGIGTP…DRDNNRVGFA (327 aa)) constitute a Peptidase A1 domain. 2 disulfides stabilise this stretch: Cys-91–Cys-160 and Cys-110–Cys-117. Residue Asp-97 is part of the active site. Asn-134 carries N-linked (GlcNAc...) asparagine glycosylation. An N-linked (GlcNAc...) (high mannose) asparagine glycan is attached at Asn-261. A disulfide bridge links Cys-284 with Cys-288. Asp-293 is an active-site residue. Cys-327 and Cys-364 form a disulfide bridge.

The protein belongs to the peptidase A1 family. In terms of assembly, consists of a light chain and a heavy chain. Interacts with ADAM30; this leads to activation of CTSD. Interacts with GRN; stabilizes CTSD; increases its proteolytic activity. In terms of processing, N- and O-glycosylated. Post-translationally, undergoes proteolytic cleavage and activation by ADAM30.

It is found in the lysosome. It localises to the melanosome. The protein localises to the secreted. Its subcellular location is the extracellular space. It catalyses the reaction Specificity similar to, but narrower than, that of pepsin A. Does not cleave the 4-Gln-|-His-5 bond in B chain of insulin.. Acid protease active in intracellular protein breakdown. Plays a role in APP processing following cleavage and activation by ADAM30 which leads to APP degradation. This is Cathepsin D (Ctsd) from Mus musculus (Mouse).